Consider the following 144-residue polypeptide: 3-dehydroquinate dehydratase (144 aa).

Residue Tyr24 is the Proton acceptor of the active site. Substrate is bound by residues Asn76, His82, and Asp89. Residue His102 is the Proton donor of the active site. Residues 103 to 104 (LS) and Arg113 each bind substrate.

This sequence belongs to the type-II 3-dehydroquinase family. In terms of assembly, homododecamer.

It catalyses the reaction 3-dehydroquinate = 3-dehydroshikimate + H2O. It functions in the pathway metabolic intermediate biosynthesis; chorismate biosynthesis; chorismate from D-erythrose 4-phosphate and phosphoenolpyruvate: step 3/7. Its function is as follows. Catalyzes a trans-dehydration via an enolate intermediate. The polypeptide is 3-dehydroquinate dehydratase (Nitrosomonas europaea (strain ATCC 19718 / CIP 103999 / KCTC 2705 / NBRC 14298)).